The chain runs to 218 residues: Cytidylate kinase (218 aa).

Residue 11 to 19 (GPGASGKGT) participates in ATP binding.

It belongs to the cytidylate kinase family. Type 1 subfamily.

It is found in the cytoplasm. The catalysed reaction is CMP + ATP = CDP + ADP. It catalyses the reaction dCMP + ATP = dCDP + ADP. The protein is Cytidylate kinase of Neisseria meningitidis serogroup A / serotype 4A (strain DSM 15465 / Z2491).